Here is a 73-residue protein sequence, read N- to C-terminus: Large ribosomal subunit protein bL31 (73 aa).

Belongs to the bacterial ribosomal protein bL31 family. Type A subfamily. In terms of assembly, part of the 50S ribosomal subunit.

Its function is as follows. Binds the 23S rRNA. This chain is Large ribosomal subunit protein bL31 (rpmE), found in Ruegeria pomeroyi (strain ATCC 700808 / DSM 15171 / DSS-3) (Silicibacter pomeroyi).